Reading from the N-terminus, the 467-residue chain is Uronate isomerase (467 aa).

It belongs to the metallo-dependent hydrolases superfamily. Uronate isomerase family.

It carries out the reaction D-glucuronate = D-fructuronate. The enzyme catalyses aldehydo-D-galacturonate = keto-D-tagaturonate. Its pathway is carbohydrate metabolism; pentose and glucuronate interconversion. The protein is Uronate isomerase of Haemophilus influenzae (strain 86-028NP).